A 316-amino-acid polypeptide reads, in one-letter code: tRNA-cytidine(32) 2-sulfurtransferase (316 aa).

Residues 58 to 63 (SGGKDS) carry the PP-loop motif motif. Residues cysteine 133, cysteine 136, and cysteine 224 each coordinate [4Fe-4S] cluster.

Belongs to the TtcA family. Homodimer. Requires Mg(2+) as cofactor. The cofactor is [4Fe-4S] cluster.

It is found in the cytoplasm. It carries out the reaction cytidine(32) in tRNA + S-sulfanyl-L-cysteinyl-[cysteine desulfurase] + AH2 + ATP = 2-thiocytidine(32) in tRNA + L-cysteinyl-[cysteine desulfurase] + A + AMP + diphosphate + H(+). Its pathway is tRNA modification. In terms of biological role, catalyzes the ATP-dependent 2-thiolation of cytidine in position 32 of tRNA, to form 2-thiocytidine (s(2)C32). The sulfur atoms are provided by the cysteine/cysteine desulfurase (IscS) system. In Aromatoleum aromaticum (strain DSM 19018 / LMG 30748 / EbN1) (Azoarcus sp. (strain EbN1)), this protein is tRNA-cytidine(32) 2-sulfurtransferase.